We begin with the raw amino-acid sequence, 324 residues long: Adenine deaminase (324 aa).

The Zn(2+) site is built by His11, His13, and His189. The active-site Proton donor is Glu192. Asp270 lines the Zn(2+) pocket. A substrate-binding site is contributed by Asp271.

Belongs to the metallo-dependent hydrolases superfamily. Adenosine and AMP deaminases family. Adenine deaminase type 2 subfamily. Requires Zn(2+) as cofactor.

The catalysed reaction is adenine + H2O + H(+) = hypoxanthine + NH4(+). In terms of biological role, catalyzes the hydrolytic deamination of adenine to hypoxanthine. Plays an important role in the purine salvage pathway and in nitrogen catabolism. This chain is Adenine deaminase, found in Sinorhizobium fredii (strain NBRC 101917 / NGR234).